Here is a 330-residue protein sequence, read N- to C-terminus: Biotin synthase (330 aa).

The region spanning 43–272 (FMGDKFDTCS…RAFLRFSGGR (230 aa)) is the Radical SAM core domain. [4Fe-4S] cluster-binding residues include C61, C65, and C68. Positions 105, 137, 197, and 267 each coordinate [2Fe-2S] cluster.

This sequence belongs to the radical SAM superfamily. Biotin synthase family. Homodimer. [4Fe-4S] cluster serves as cofactor. It depends on [2Fe-2S] cluster as a cofactor.

The catalysed reaction is (4R,5S)-dethiobiotin + (sulfur carrier)-SH + 2 reduced [2Fe-2S]-[ferredoxin] + 2 S-adenosyl-L-methionine = (sulfur carrier)-H + biotin + 2 5'-deoxyadenosine + 2 L-methionine + 2 oxidized [2Fe-2S]-[ferredoxin]. Its pathway is cofactor biosynthesis; biotin biosynthesis; biotin from 7,8-diaminononanoate: step 2/2. Functionally, catalyzes the conversion of dethiobiotin (DTB) to biotin by the insertion of a sulfur atom into dethiobiotin via a radical-based mechanism. The protein is Biotin synthase of Porphyromonas gingivalis (strain ATCC 33277 / DSM 20709 / CIP 103683 / JCM 12257 / NCTC 11834 / 2561).